The sequence spans 1112 residues: DNA repair protein rad13 (1112 aa).

The N-domain stretch occupies residues 1–95; the sequence is MGVSGLWDIL…QTIQKRQARR (95 aa). Residues Asp-30 and Asp-77 each coordinate Mg(2+). Positions 395 to 414 constitute a UIM domain; that stretch reads TDDLILQLATQQSLEENKKS. Residues 742–870 are I-domain; sequence KRSEKRDADE…LALEILHEFP (129 aa). The Mg(2+) site is built by Glu-777, Glu-779, Asp-798, Asp-800, and Asp-849. A disordered region spans residues 1056–1112; the sequence is KMMASKNSSDSDSDSEDNFLASLTPKTNSSSISIENLPRKTKLSTSLLKKPSKRRRK. Over residues 1079 to 1089 the composition is skewed to polar residues; it reads TPKTNSSSISI.

Belongs to the XPG/RAD2 endonuclease family. XPG subfamily. It depends on Mg(2+) as a cofactor.

The protein resides in the nucleus. Its function is as follows. Single-stranded DNA endonuclease involved in excision repair of DNA damaged with UV light, bulky adducts, or cross-linking agents. Essential for the incision step of excision-repair. This chain is DNA repair protein rad13 (rad13), found in Schizosaccharomyces pombe (strain 972 / ATCC 24843) (Fission yeast).